The following is a 270-amino-acid chain: Phosphatidate cytidylyltransferase (270 aa).

Transmembrane regions (helical) follow at residues 19 to 39 (LWLTWVGGVGFTLFSIAIGLA), 53 to 73 (TAFSRLFGWAWLIVTGILLIL), 76 to 96 (GALLTIGFLVAGCAILLVTQW), 101 to 121 (GWPAAGLFYAGFSALSLSLLR), 126 to 146 (FGFTTIVFLFAVVWSTDIAAY), 183 to 203 (LVASLVAAPGGWGVPVLALLL), and 248 to 268 (ALLYLFGAIFAEPDVPSAIFF).

The protein belongs to the CDS family.

Its subcellular location is the cell inner membrane. The enzyme catalyses a 1,2-diacyl-sn-glycero-3-phosphate + CTP + H(+) = a CDP-1,2-diacyl-sn-glycerol + diphosphate. Its pathway is phospholipid metabolism; CDP-diacylglycerol biosynthesis; CDP-diacylglycerol from sn-glycerol 3-phosphate: step 3/3. The protein is Phosphatidate cytidylyltransferase (cdsA) of Brucella suis biovar 1 (strain 1330).